The chain runs to 501 residues: Oxygen-independent coproporphyrinogen-III oxidase-like protein HemZ (501 aa).

Positions 163–405 (DLYRVKDEVS…VAWTKEHGYV (243 aa)) constitute a Radical SAM core domain. Y174 is a binding site for S-adenosyl-L-methionine. [4Fe-4S] cluster is bound by residues C180 and C184. Residue Y186 participates in S-adenosyl-L-methionine binding. Residue C187 coordinates [4Fe-4S] cluster. S-adenosyl-L-methionine-binding positions include G233, 234–235 (GT), E267, Q295, R307, and D332.

This sequence belongs to the anaerobic coproporphyrinogen-III oxidase family. HemZ subfamily. [4Fe-4S] cluster serves as cofactor.

It functions in the pathway porphyrin-containing compound metabolism; protoporphyrin-IX biosynthesis. In terms of biological role, involved in the biosynthesis of porphyrin-containing compound. In Bacillus subtilis (strain 168), this protein is Oxygen-independent coproporphyrinogen-III oxidase-like protein HemZ (hemZ).